The chain runs to 99 residues: Acylphosphatase-1 (99 aa).

Positions Ser-9 to Lys-99 constitute an Acylphosphatase-like domain. Residues Arg-24 and Asn-42 contribute to the active site.

The protein belongs to the acylphosphatase family.

The enzyme catalyses an acyl phosphate + H2O = a carboxylate + phosphate + H(+). The chain is Acylphosphatase-1 (acyp1) from Xenopus laevis (African clawed frog).